A 107-amino-acid chain; its full sequence is uncharacterized protein (107 aa).

A helical membrane pass occupies residues 13-33 (VLIVTFLSSFIFIVWLPVALV).

The protein localises to the membrane. This is an uncharacterized protein from Saccharomyces cerevisiae (strain ATCC 204508 / S288c) (Baker's yeast).